Here is a 317-residue protein sequence, read N- to C-terminus: MYNYLDFEKPVADLEGQILELKKLAQEQGSVEMSDEIRRLEKRSADALKDIYRKLTPWQKTQIARHPDRPHCLEYIDRLFTEFTPLAGDRKFANDEALQTGFGRFNGQAVAIIGQEKGSDTKTRLKHNFGSARPEGYRKAVRIMEMADRFQLPLITFVDTAGAYPGVSAEERGQAEAIARSTAECLRLRVPVISIIIGEGGSGGAIAIAVANRVYMLEHSIYSVISPEGAASILWHDSTRAKDAASSMRITAQDLFDLKVIDGVIPEPMGGAHRGKEAVIDAAGDIITASLRSMKDIDGETLKQERRQKFLEIGRNI.

The CoA carboxyltransferase C-terminal domain maps to 40-293 (LEKRSADALK…GDIITASLRS (254 aa)).

It belongs to the AccA family. In terms of assembly, acetyl-CoA carboxylase is a heterohexamer composed of biotin carboxyl carrier protein (AccB), biotin carboxylase (AccC) and two subunits each of ACCase subunit alpha (AccA) and ACCase subunit beta (AccD).

It localises to the cytoplasm. The enzyme catalyses N(6)-carboxybiotinyl-L-lysyl-[protein] + acetyl-CoA = N(6)-biotinyl-L-lysyl-[protein] + malonyl-CoA. Its pathway is lipid metabolism; malonyl-CoA biosynthesis; malonyl-CoA from acetyl-CoA: step 1/1. Component of the acetyl coenzyme A carboxylase (ACC) complex. First, biotin carboxylase catalyzes the carboxylation of biotin on its carrier protein (BCCP) and then the CO(2) group is transferred by the carboxyltransferase to acetyl-CoA to form malonyl-CoA. The chain is Acetyl-coenzyme A carboxylase carboxyl transferase subunit alpha from Brucella anthropi (strain ATCC 49188 / DSM 6882 / CCUG 24695 / JCM 21032 / LMG 3331 / NBRC 15819 / NCTC 12168 / Alc 37) (Ochrobactrum anthropi).